The sequence spans 264 residues: 3-methyl-2-oxobutanoate hydroxymethyltransferase (264 aa).

Mg(2+) is bound by residues D45 and D84. 3-methyl-2-oxobutanoate is bound by residues D45–S46, D84, and K112. E114 contacts Mg(2+). E181 serves as the catalytic Proton acceptor.

This sequence belongs to the PanB family. In terms of assembly, homodecamer; pentamer of dimers. The cofactor is Mg(2+).

It is found in the cytoplasm. It carries out the reaction 3-methyl-2-oxobutanoate + (6R)-5,10-methylene-5,6,7,8-tetrahydrofolate + H2O = 2-dehydropantoate + (6S)-5,6,7,8-tetrahydrofolate. The protein operates within cofactor biosynthesis; (R)-pantothenate biosynthesis; (R)-pantoate from 3-methyl-2-oxobutanoate: step 1/2. In terms of biological role, catalyzes the reversible reaction in which hydroxymethyl group from 5,10-methylenetetrahydrofolate is transferred onto alpha-ketoisovalerate to form ketopantoate. This chain is 3-methyl-2-oxobutanoate hydroxymethyltransferase, found in Pseudoalteromonas translucida (strain TAC 125).